Here is a 178-residue protein sequence, read N- to C-terminus: MVSRVAKNPIKIPTGVEVNVAGQQITVKGKLGTLTRVIHRAVKVTKTDAELQTICANDSPGSNALAGTARAVLANMVQGVHTGFQRKLVMVGVGYRAKAEGKKLNLTVGLSHPVNIEMPEGITVETPSQTEIIVKGADKQRVSQVAANIREIRPPEPYKGKGIRYDNERVILKEAKKK.

Belongs to the universal ribosomal protein uL6 family. As to quaternary structure, part of the 50S ribosomal subunit.

Its function is as follows. This protein binds to the 23S rRNA, and is important in its secondary structure. It is located near the subunit interface in the base of the L7/L12 stalk, and near the tRNA binding site of the peptidyltransferase center. This is Large ribosomal subunit protein uL6 from Coxiella burnetii (strain CbuK_Q154) (Coxiella burnetii (strain Q154)).